The primary structure comprises 590 residues: V-type ATP synthase alpha chain (590 aa).

232–239 provides a ligand contact to ATP; the sequence is GPFGSGKT.

It belongs to the ATPase alpha/beta chains family.

It carries out the reaction ATP + H2O + 4 H(+)(in) = ADP + phosphate + 5 H(+)(out). Produces ATP from ADP in the presence of a proton gradient across the membrane. The V-type alpha chain is a catalytic subunit. The sequence is that of V-type ATP synthase alpha chain from Thermoanaerobacter pseudethanolicus (strain ATCC 33223 / 39E) (Clostridium thermohydrosulfuricum).